The primary structure comprises 130 residues: Small ribosomal subunit protein uS11 (130 aa).

The protein belongs to the universal ribosomal protein uS11 family. In terms of assembly, part of the 30S ribosomal subunit. Interacts with proteins S7 and S18. Binds to IF-3.

Located on the platform of the 30S subunit, it bridges several disparate RNA helices of the 16S rRNA. Forms part of the Shine-Dalgarno cleft in the 70S ribosome. This is Small ribosomal subunit protein uS11 from Sulfurimonas denitrificans (strain ATCC 33889 / DSM 1251) (Thiomicrospira denitrificans (strain ATCC 33889 / DSM 1251)).